The following is a 257-amino-acid chain: Adenosylcobinamide-GDP ribazoletransferase (257 aa).

4 helical membrane passes run 28 to 48 (FARSPWTFPVVGYLVGGLVAL), 50 to 70 (LFVPAPAPTVALAFVLAVYAV), 110 to 130 (VALALVVLGLATAALGLVEVA), and 199 to 219 (WPQVLPGLAALLVALATAALV).

Belongs to the CobS family. The cofactor is Mg(2+).

Its subcellular location is the cell membrane. The enzyme catalyses alpha-ribazole + adenosylcob(III)inamide-GDP = adenosylcob(III)alamin + GMP + H(+). It carries out the reaction alpha-ribazole 5'-phosphate + adenosylcob(III)inamide-GDP = adenosylcob(III)alamin 5'-phosphate + GMP + H(+). It participates in cofactor biosynthesis; adenosylcobalamin biosynthesis; adenosylcobalamin from cob(II)yrinate a,c-diamide: step 7/7. Joins adenosylcobinamide-GDP and alpha-ribazole to generate adenosylcobalamin (Ado-cobalamin). Also synthesizes adenosylcobalamin 5'-phosphate from adenosylcobinamide-GDP and alpha-ribazole 5'-phosphate. This is Adenosylcobinamide-GDP ribazoletransferase from Halorubrum lacusprofundi (strain ATCC 49239 / DSM 5036 / JCM 8891 / ACAM 34).